We begin with the raw amino-acid sequence, 378 residues long: Lipid-A-disaccharide synthase (378 aa).

It belongs to the LpxB family.

It catalyses the reaction a lipid X + a UDP-2-N,3-O-bis[(3R)-3-hydroxyacyl]-alpha-D-glucosamine = a lipid A disaccharide + UDP + H(+). The protein operates within bacterial outer membrane biogenesis; LPS lipid A biosynthesis. Functionally, condensation of UDP-2,3-diacylglucosamine and 2,3-diacylglucosamine-1-phosphate to form lipid A disaccharide, a precursor of lipid A, a phosphorylated glycolipid that anchors the lipopolysaccharide to the outer membrane of the cell. The protein is Lipid-A-disaccharide synthase of Pseudomonas aeruginosa (strain LESB58).